A 206-amino-acid chain; its full sequence is Max dimerization protein 3 (206 aa).

The interaction with SIN3A and SIN3B stretch occupies residues 8-25 (IQVLLQAAEFLERREREA). Residues 57–109 (SGRHVHNELEKRRRAQLKRCLEQLRQQMPLGVDHTRYTTLSLLRGARMHIQKL) enclose the bHLH domain.

In terms of assembly, efficient DNA binding requires dimerization with another bHLH protein. Binds DNA as a heterodimer with MAX. Interacts with SIN3A AND SIN3B. Interacts with RNF17.

It localises to the nucleus. In terms of biological role, transcriptional repressor. Binds with MAX to form a sequence-specific DNA-binding protein complex which recognizes the core sequence 5'-CAC[GA]TG-3'. Antagonizes MYC transcriptional activity by competing for MAX and suppresses MYC dependent cell transformation. The protein is Max dimerization protein 3 (Mxd3) of Rattus norvegicus (Rat).